Consider the following 141-residue polypeptide: Hemoglobin subunit alpha-D (141 aa).

The Globin domain occupies 1–141 (VLTAEDKKLI…VAAVLAEKYR (141 aa)). Residues histidine 58 and histidine 87 each coordinate heme b.

Belongs to the globin family. In terms of assembly, heterotetramer of two alpha-D chains and two beta chains. As to expression, red blood cells.

Its function is as follows. Involved in oxygen transport from the lung to the various peripheral tissues. The chain is Hemoglobin subunit alpha-D (HBAD) from Sturnus vulgaris (Starling).